Reading from the N-terminus, the 337-residue chain is Glyceraldehyde-3-phosphate dehydrogenase 1, cytosolic (337 aa).

Residues 1–151 (MGKIKIGING…YTSDVNIVSN (151 aa)) form a binding to NAD region. NAD(+) contacts are provided by residues 13-14 (RI), Asp35, and Arg82. Positions 152–337 (ASCTTNCLAP…DLIRHMFKTQ (186 aa)) are catalytic. D-glyceraldehyde 3-phosphate contacts are provided by residues 153–155 (SCT), Thr184, 213–214 (TG), and Arg236. Residue Cys154 is the Nucleophile of the active site. Asn318 lines the NAD(+) pocket.

It belongs to the glyceraldehyde-3-phosphate dehydrogenase family. As to quaternary structure, homotetramer.

It localises to the cytoplasm. It catalyses the reaction D-glyceraldehyde 3-phosphate + phosphate + NAD(+) = (2R)-3-phospho-glyceroyl phosphate + NADH + H(+). The protein operates within carbohydrate degradation; glycolysis; pyruvate from D-glyceraldehyde 3-phosphate: step 1/5. Key enzyme in glycolysis that catalyzes the first step of the pathway by converting D-glyceraldehyde 3-phosphate (G3P) into 3-phospho-D-glyceroyl phosphate. Essential for the maintenance of cellular ATP levels and carbohydrate metabolism. This chain is Glyceraldehyde-3-phosphate dehydrogenase 1, cytosolic (GAPC1), found in Zea mays (Maize).